A 636-amino-acid chain; its full sequence is DNA-directed RNA polymerase subunit beta' (636 aa).

Positions 70, 72, 85, and 88 each coordinate Zn(2+). The Mg(2+) site is built by Asp-471, Asp-473, and Asp-475.

This sequence belongs to the RNA polymerase beta' chain family. RpoC1 subfamily. The cofactor is Mg(2+). Requires Zn(2+) as cofactor.

Its subcellular location is the plastid. It is found in the cyanelle. The enzyme catalyses RNA(n) + a ribonucleoside 5'-triphosphate = RNA(n+1) + diphosphate. In terms of biological role, DNA-dependent RNA polymerase catalyzes the transcription of DNA into RNA using the four ribonucleoside triphosphates as substrates. The chain is DNA-directed RNA polymerase subunit beta' from Cyanophora paradoxa.